Reading from the N-terminus, the 221-residue chain is Serine/arginine-rich splicing factor 9 (221 aa).

2 RRM domains span residues 14–89 (GRIY…FPRA) and 111–187 (FRVL…PERG). Lys-36 is covalently cross-linked (Glycyl lysine isopeptide (Lys-Gly) (interchain with G-Cter in SUMO2)). The span at 187-198 (GTSYGCSRSRSG) shows a compositional bias: low complexity. The tract at residues 187-221 (GTSYGCSRSRSGSRGRDSPYQSRGSPHYFSPFRPY) is disordered. The interaction with SAFB1 stretch occupies residues 188-200 (TSYGCSRSRSGSR). Residues Ser-189, Ser-193, Ser-195, Ser-204, Ser-208, and Ser-211 each carry the phosphoserine modification. Tyr-214 carries the phosphotyrosine modification. Residue Ser-216 is modified to Phosphoserine.

This sequence belongs to the splicing factor SR family. Interacts with KHDRBS3. Interacts with HABP4. Interacts with NOL3/ARC/NOP30. Interacts with NSEP1/YB-1/YB1. Interacts with SAFB/SAFB1. Interacts with SRSF6/SFRS6. Interacts with TRA2B/SFRS10. Interacts with C1QBP. May also interact with DUSP11/PIR1. Extensively phosphorylated on serine residues in the RS domain.

The protein resides in the nucleus. In terms of biological role, plays a role in constitutive splicing and can modulate the selection of alternative splice sites. Represses the splicing of MAPT/Tau exon 10. This is Serine/arginine-rich splicing factor 9 (Srsf9) from Rattus norvegicus (Rat).